A 280-amino-acid polypeptide reads, in one-letter code: MFDFFRKSKYVTVKPETKQKEIPDGLWQKCPRCGEIIFNKELEKNFKVCPKCGYHFKISAWERIKLLCDENSFVEFGREISGGNPLNFPGYEEKLAEAREKTGLKEAVVTGLGKINGREVVLAIMDPNFIMASMGTAVGEKICLAMEKALEKKLPLVVFTASGGARMQEGIFSLMQMAKTVQLVNRLNAEKIFYLVVMTDPTTGGVSASFAALGDIILAEPGALIGFAGPRVIEQTIRQKLPEGFQRAEFLEQHGFIDAVVSREQQKEVITKLLAWHSQK.

Residues leucine 26–lysine 280 form the CoA carboxyltransferase N-terminal domain. The Zn(2+) site is built by cysteine 30, cysteine 33, cysteine 49, and cysteine 52. The C4-type zinc finger occupies cysteine 30–cysteine 52.

It belongs to the AccD/PCCB family. In terms of assembly, acetyl-CoA carboxylase is a heterohexamer composed of biotin carboxyl carrier protein (AccB), biotin carboxylase (AccC) and two subunits each of ACCase subunit alpha (AccA) and ACCase subunit beta (AccD). Zn(2+) is required as a cofactor.

It is found in the cytoplasm. The catalysed reaction is N(6)-carboxybiotinyl-L-lysyl-[protein] + acetyl-CoA = N(6)-biotinyl-L-lysyl-[protein] + malonyl-CoA. Its pathway is lipid metabolism; malonyl-CoA biosynthesis; malonyl-CoA from acetyl-CoA: step 1/1. Its function is as follows. Component of the acetyl coenzyme A carboxylase (ACC) complex. Biotin carboxylase (BC) catalyzes the carboxylation of biotin on its carrier protein (BCCP) and then the CO(2) group is transferred by the transcarboxylase to acetyl-CoA to form malonyl-CoA. In Carboxydothermus hydrogenoformans (strain ATCC BAA-161 / DSM 6008 / Z-2901), this protein is Acetyl-coenzyme A carboxylase carboxyl transferase subunit beta.